A 152-amino-acid chain; its full sequence is UPF0266 membrane protein YobD (152 aa).

Helical transmembrane passes span 6–26 (LVLI…QFIM), 45–65 (IDSV…VTNH), and 67–87 (ALIT…IFWI).

This sequence belongs to the UPF0266 family.

The protein localises to the cell inner membrane. The chain is UPF0266 membrane protein YobD from Shigella dysenteriae serotype 1 (strain Sd197).